The following is a 150-amino-acid chain: Arginine repressor (150 aa).

This sequence belongs to the ArgR family.

Its subcellular location is the cytoplasm. It functions in the pathway amino-acid biosynthesis; L-arginine biosynthesis [regulation]. Regulates arginine biosynthesis genes. The chain is Arginine repressor from Finegoldia magna (strain ATCC 29328 / DSM 20472 / WAL 2508) (Peptostreptococcus magnus).